Consider the following 489-residue polypeptide: MGCLHSKTANLPSSDDPSAPNKPESVNGDQVDQEIQNFKEFELNELRKATNGFSPSCIVSEGGEKAPNVVYRGKLEGNHLVAIKRFSRQSWPDAQQFVVEATGVGKLRNKRIVSLIGCCAEGDERLLVAEYMPNDTLSKHLFHWEKQPLPWDMRVRIADYIAEALDYCNIENRKIYHDLNAYRILFDEEGDPRLSTFGLMKNSRDGKSYSTNLAYTPPEFLRTGRVIPESVIFSYGTILLDLLSGKHIPPSHALDIIRGKNALLLMDSSLEGQYANDDATKLVDLASKCLQSEAKDRPDTKFLLSAVAPLQKQEEVASHVLMGLPKNTVILPTMLSPLGKACAKMDLATFHDILLKTGYRDEEGAENELSFQEWTQQVQEMLNTKKFGDIAFRDKDFKNSIEYYSKLVGMMPVPSATVFARRAFSYLMTDQQELALRDAMQAQVCIPEWPTAFYLQALALSKLGMETDAQDMLNDGAAYDAKRQNSWRC.

Residues 1–30 (MGCLHSKTANLPSSDDPSAPNKPESVNGDQ) form a disordered region. G2 is lipidated: N-myristoyl glycine. Polar residues predominate over residues 7–16 (KTANLPSSDD). The Protein kinase domain maps to 56-322 (SCIVSEGGEK…QEEVASHVLM (267 aa)). ATP contacts are provided by residues 62 to 70 (GGEKAPNVV) and K84. The Proton acceptor role is filled by D178.

This sequence belongs to the protein kinase superfamily. Ser/Thr protein kinase family. Post-translationally, phosphorylated by BRI1 upon brassinolide (BL) treatment.

The protein resides in the cell membrane. It carries out the reaction L-seryl-[protein] + ATP = O-phospho-L-seryl-[protein] + ADP + H(+). The catalysed reaction is L-threonyl-[protein] + ATP = O-phospho-L-threonyl-[protein] + ADP + H(+). Probable serine/threonine kinase that acts as a positive regulator of brassinosteroid (BR) signaling downstream of the receptor kinase BRI1. Mediates signal transduction from BRI1 by functioning as substrate of BRI1. The sequence is that of Serine/threonine-protein kinase BSK2 from Arabidopsis thaliana (Mouse-ear cress).